An 873-amino-acid polypeptide reads, in one-letter code: DNA mismatch repair protein MutS (873 aa).

Residues 1–34 are disordered; sequence MAAIPTPRLHRGVTHLSRQTKSRARHPMSTPQHT. Over residues 8–26 the composition is skewed to basic residues; the sequence is RLHRGVTHLSRQTKSRARH. Residue 635–642 participates in ATP binding; it reads GPNMGGKS.

Belongs to the DNA mismatch repair MutS family.

Its function is as follows. This protein is involved in the repair of mismatches in DNA. It is possible that it carries out the mismatch recognition step. This protein has a weak ATPase activity. This is DNA mismatch repair protein MutS from Chromobacterium violaceum (strain ATCC 12472 / DSM 30191 / JCM 1249 / CCUG 213 / NBRC 12614 / NCIMB 9131 / NCTC 9757 / MK).